The following is a 342-amino-acid chain: Lumican (342 aa).

An N-terminal signal peptide occupies residues 1–18 (MNLGVFPLLLALIGGASS). Sulfotyrosine occurs at positions 20, 23, and 34. One can recognise an LRRNT domain in the interval 32 to 70 (ALYGRSSPNCAPECNCPESYPSAMYCDELKLKSVPMVPP). 8 LRR repeats span residues 71-92 (GIKY…AFEN), 95-118 (DLQW…VFSK), 121-141 (QLKK…PLPK), 142-163 (SLVD…DGLV), 164-185 (NLTF…AALK), 189-209 (SLEY…GLPV), 210-231 (SLLT…YFKR), and 234-254 (ALQY…PGNS). Residue Asn-92 is glycosylated (N-linked (GlcNAc...) (keratan sulfate) asparagine). An N-linked (GlcNAc...) (keratan sulfate) asparagine glycan is attached at Asn-131. N-linked (GlcNAc...) (keratan sulfate) asparagine glycosylation is present at Asn-164. Residue Asn-256 is glycosylated (N-linked (GlcNAc...) (keratan sulfate) asparagine). LRR repeat units lie at residues 259–280 (SLLE…NENL) and 281–300 (ENYY…SFCK). Cys-299 and Cys-332 are disulfide-bonded. Ser-308 is modified (phosphoserine). Residues 309 to 330 (KIKHLRLDGNHITQTSLPPDMY) form an LRR 11 repeat.

Belongs to the small leucine-rich proteoglycan (SLRP) family. SLRP class II subfamily. As to quaternary structure, binds to laminin. Post-translationally, sulfated on tyrosine residue(s). In terms of processing, contains keratan sulfate. In terms of tissue distribution, cornea and other tissues.

Its subcellular location is the secreted. The protein localises to the extracellular space. The protein resides in the extracellular matrix. In Bos taurus (Bovine), this protein is Lumican (LUM).